We begin with the raw amino-acid sequence, 339 residues long: Serpentine receptor class delta-19 (339 aa).

7 helical membrane-spanning segments follow: residues 2–22 (IIFFEIWHWSWALLGCYLNLL), 39–59 (ATLIINFAATDFVECALDLFI), 90–110 (VGLSFLLHCLTHSVWSLLISF), 130–150 (ITIMFYIPSLVQALTYWTLFV), 187–207 (VYAVAHICLPFFPVYITIFVL), 242–262 (IIPMFLGIAVLLYFSSQSGLL), and 270–290 (SIFSVAILMPALSPITYLYFV).

This sequence belongs to the nematode receptor-like protein srd family.

It is found in the membrane. In Caenorhabditis elegans, this protein is Serpentine receptor class delta-19 (srd-19).